We begin with the raw amino-acid sequence, 366 residues long: 3-beta-hydroxysteroid dehydrogenase (366 aa).

Tyr-154 (proton donor) is an active-site residue.

Belongs to the 3-beta-HSD family.

The catalysed reaction is testosterone + NAD(+) = androst-4-ene-3,17-dione + NADH + H(+). The enzyme catalyses testosterone + NADP(+) = androst-4-ene-3,17-dione + NADPH + H(+). Catalyzes the degradation of testosterone into androstenedione. The protein is 3-beta-hydroxysteroid dehydrogenase of Mycolicibacterium neoaurum (Mycobacterium neoaurum).